Reading from the N-terminus, the 158-residue chain is Protein Smg homolog (158 aa).

Belongs to the Smg family.

The sequence is that of Protein Smg homolog from Coxiella burnetii (strain Dugway 5J108-111).